We begin with the raw amino-acid sequence, 279 residues long: uncharacterized protein (279 aa).

An HTH rpiR-type domain is found at 1 to 77 (MGILEQLENP…VTLAKEISNK (77 aa)). The H-T-H motif DNA-binding region spans 37 to 56 (ISIIAKESGVGEATITRFTK). The SIS domain occupies 123-263 (CRDLIMNAKR…YTEVIKEMFS (141 aa)).

This is an uncharacterized protein from Clostridium perfringens (strain 13 / Type A).